Reading from the N-terminus, the 421-residue chain is Lipid II:glycine glycyltransferase (421 aa).

Belongs to the FemABX family. In terms of assembly, monomer.

Its subcellular location is the cytoplasm. The catalysed reaction is beta-D-GlcNAc-(1-&gt;4)-Mur2Ac(oyl-L-Ala-D-isoglutaminyl-L-Lys-D-Ala-D-Ala)-di-trans,octa-cis-undecaprenyl diphosphate + glycyl-tRNA(Gly) = beta-D-GlcNAc-(1-&gt;4)-Mur2Ac(oyl-L-Ala-D-isoglutaminyl-L-Lys-(N(6)-Gly)-D-Ala-D-Ala)-di-trans,octa-cis-undecaprenyl diphosphate + tRNA(Gly) + H(+). In terms of biological role, catalyzes the incorporation of the first glycine of the pentaglycine interpeptide bridge, which is characteristic of the S.aureus peptidoglycan. This glycine is added to the epsilon-amino group of the L-lysine of the membrane-bound lipid II intermediate (GlcNAc-(beta-1,4)-N-acetylmuramic acid(-L-Ala-D-iGln-L-Lys-D-Ala-D-Ala)-pyrophosphoryl-undecaprenol), using glycyl-tRNA(Gly) as donor, in a ribosome-independent mechanism. The sequence is that of Lipid II:glycine glycyltransferase (femX) from Staphylococcus aureus (strain MSSA476).